The sequence spans 578 residues: Palmitoyltransferase ZDHHC1 (578 aa).

Residues 1–41 (MDVCSKNSNRTAPVSEGGIRRADVPLCSRTNGWSWPPHPFQ) lie on the Cytoplasmic side of the membrane. A helical transmembrane segment spans residues 42-62 (FLAWLLYLYFAVTGFGVFVPL). Topologically, residues 63 to 71 (LPTHWIPAG) are lumenal. Residues 72 to 92 (YICTGITFVCHLFMHLMAVSI) traverse the membrane as a helical segment. The Cytoplasmic segment spans residues 93–174 (DPADYNVRAK…YWLFLNSVIS (82 aa)). One can recognise a DHHC domain in the interval 121-173 (ENCHCYLCEVDVGPKSKHCSACNKCVASFDHHCRWLNNCVGSRNYWLFLNSVI). Cysteine 153 functions as the S-palmitoyl cysteine intermediate in the catalytic mechanism. A helical transmembrane segment spans residues 175–195 (ALLGIVLVVVIASYVFIEFFL). Over 196–230 (DPSKLRSDKHFQQVRNESVVWFVFLPVAPVTTAGP) the chain is Lumenal. A helical membrane pass occupies residues 231 to 251 (AIPALAGVTIALGLLSALLLG). At 252-578 (HLLCFHIYLM…PSSRVGTSLA (327 aa)) the chain is on the cytoplasmic side. A compositionally biased stretch (basic and acidic residues) spans 278–288 (QEAGDSRKPPP). Disordered regions lie at residues 278–298 (QEAG…PKLN), 345–376 (HMDE…KRKV), 497–517 (SAAG…TAAR), and 532–578 (SMFM…TSLA). Residues 363-376 (PHPHKHAQKKKRKV) are compositionally biased toward basic residues. Positions 552 to 561 (AAKRKQTGKK) are enriched in basic residues.

The protein belongs to the DHHC palmitoyltransferase family.

The protein localises to the endosome membrane. It localises to the endoplasmic reticulum membrane. Its subcellular location is the golgi apparatus. It catalyses the reaction L-cysteinyl-[protein] + hexadecanoyl-CoA = S-hexadecanoyl-L-cysteinyl-[protein] + CoA. Palmitoyltransferase that catalyzes the addition of palmitate onto various protein substrates, such as ncdn and nlrp3. The protein is Palmitoyltransferase ZDHHC1 of Danio rerio (Zebrafish).